The following is a 644-amino-acid chain: DNA gyrase subunit B (644 aa).

Residues 429–543 form the Toprim domain; that stretch reads CEIFLVEGDS…AGYVYIAQPP (115 aa). Residues Glu-435, Asp-508, and Asp-510 each coordinate Mg(2+).

Belongs to the type II topoisomerase GyrB family. Heterotetramer, composed of two GyrA and two GyrB chains. In the heterotetramer, GyrA contains the active site tyrosine that forms a transient covalent intermediate with DNA, while GyrB binds cofactors and catalyzes ATP hydrolysis. Mg(2+) is required as a cofactor. The cofactor is Mn(2+). Requires Ca(2+) as cofactor.

It is found in the cytoplasm. The enzyme catalyses ATP-dependent breakage, passage and rejoining of double-stranded DNA.. A type II topoisomerase that negatively supercoils closed circular double-stranded (ds) DNA in an ATP-dependent manner to modulate DNA topology and maintain chromosomes in an underwound state. Negative supercoiling favors strand separation, and DNA replication, transcription, recombination and repair, all of which involve strand separation. Also able to catalyze the interconversion of other topological isomers of dsDNA rings, including catenanes and knotted rings. Type II topoisomerases break and join 2 DNA strands simultaneously in an ATP-dependent manner. This Staphylococcus aureus (strain USA300) protein is DNA gyrase subunit B.